A 95-amino-acid chain; its full sequence is Translation initiation factor IF-1 (95 aa).

In terms of domain architecture, S1-like spans M1–K72. The segment at R70–R95 is disordered. Residues R86–R95 are compositionally biased toward pro residues.

This sequence belongs to the IF-1 family. As to quaternary structure, component of the 30S ribosomal translation pre-initiation complex which assembles on the 30S ribosome in the order IF-2 and IF-3, IF-1 and N-formylmethionyl-tRNA(fMet); mRNA recruitment can occur at any time during PIC assembly.

It is found in the cytoplasm. Its function is as follows. One of the essential components for the initiation of protein synthesis. Stabilizes the binding of IF-2 and IF-3 on the 30S subunit to which N-formylmethionyl-tRNA(fMet) subsequently binds. Helps modulate mRNA selection, yielding the 30S pre-initiation complex (PIC). Upon addition of the 50S ribosomal subunit IF-1, IF-2 and IF-3 are released leaving the mature 70S translation initiation complex. This chain is Translation initiation factor IF-1, found in Rhodospirillum rubrum (strain ATCC 11170 / ATH 1.1.1 / DSM 467 / LMG 4362 / NCIMB 8255 / S1).